The primary structure comprises 423 residues: UDP-N-acetylmuramoylalanine--D-glutamate ligase (423 aa).

112–118 contacts ATP; sequence GSVGKST.

The protein belongs to the MurCDEF family.

It is found in the cytoplasm. The enzyme catalyses UDP-N-acetyl-alpha-D-muramoyl-L-alanine + D-glutamate + ATP = UDP-N-acetyl-alpha-D-muramoyl-L-alanyl-D-glutamate + ADP + phosphate + H(+). Its pathway is cell wall biogenesis; peptidoglycan biosynthesis. Functionally, cell wall formation. Catalyzes the addition of glutamate to the nucleotide precursor UDP-N-acetylmuramoyl-L-alanine (UMA). The polypeptide is UDP-N-acetylmuramoylalanine--D-glutamate ligase (Thermosipho africanus (strain TCF52B)).